Reading from the N-terminus, the 213-residue chain is Cytochrome b6 (213 aa).

Residues 30-50 (IFFCLGGLTLLCFIVQCLTGI) traverse the membrane as a helical segment. Heme c is bound at residue Cys33. Heme b contacts are provided by His84 and His98. 3 helical membrane passes run 88–108 (CQLM…TGAF), 114–134 (LNWV…FTGY), and 184–204 (LHVM…FIMI). Heme b-binding residues include His185 and His200.

Belongs to the cytochrome b family. PetB subfamily. As to quaternary structure, the subunits of the cytochrome bc complex are a Rieske Fe-S protein (PetC), cytochrome b6 (PetB), subunit IV (PetD), and a diheme cytochrome c (PetX). Heme b is required as a cofactor. The cofactor is heme c.

The protein localises to the cell membrane. Its function is as follows. Component of the cytochrome bc complex which donates electrons to the photosynthetic reaction center. The sequence is that of Cytochrome b6 from Heliomicrobium gestii (Heliobacterium gestii).